The primary structure comprises 552 residues: uncharacterized protein (552 aa).

The DhaL domain maps to 8–200; sequence KLFADMIIQG…LLCVYEGFLK (193 aa).

This is an uncharacterized protein from Staphylococcus epidermidis (strain ATCC 35984 / DSM 28319 / BCRC 17069 / CCUG 31568 / BM 3577 / RP62A).